An 803-amino-acid chain; its full sequence is Translation initiation factor IF-2 (803 aa).

Disordered stretches follow at residues 95 to 125 (PVVE…EKAE) and 138 to 178 (EVKE…EREE). Polar residues predominate over residues 111-121 (VPLTSDTTNLN). Positions 138–155 (EVKEEAKKTPSEKKETPK) are enriched in basic and acidic residues. The segment covering 156 to 167 (KGPRKETRRSRK) has biased composition (basic residues). Over residues 168–178 (PDKEDKWEREE) the composition is skewed to basic and acidic residues. A tr-type G domain is found at 302–471 (PRAPVVTIMG…LLQAEVLELK (170 aa)). Residues 311–318 (GHVDHGKT) form a G1 region. 311–318 (GHVDHGKT) is a binding site for GTP. A G2 region spans residues 336 to 340 (GITQH). Residues 357–360 (DTPG) form a G3 region. GTP-binding positions include 357-361 (DTPGH) and 411-414 (NKID). The G4 stretch occupies residues 411–414 (NKID). Positions 447 to 449 (SAK) are G5.

Belongs to the TRAFAC class translation factor GTPase superfamily. Classic translation factor GTPase family. IF-2 subfamily.

It localises to the cytoplasm. Functionally, one of the essential components for the initiation of protein synthesis. Protects formylmethionyl-tRNA from spontaneous hydrolysis and promotes its binding to the 30S ribosomal subunits. Also involved in the hydrolysis of GTP during the formation of the 70S ribosomal complex. This Coxiella burnetii (strain Dugway 5J108-111) protein is Translation initiation factor IF-2.